The primary structure comprises 143 residues: Large ribosomal subunit protein uL11 (143 aa).

The protein belongs to the universal ribosomal protein uL11 family. In terms of assembly, part of the ribosomal stalk of the 50S ribosomal subunit. Interacts with L10 and the large rRNA to form the base of the stalk. L10 forms an elongated spine to which L12 dimers bind in a sequential fashion forming a multimeric L10(L12)X complex. One or more lysine residues are methylated.

In terms of biological role, forms part of the ribosomal stalk which helps the ribosome interact with GTP-bound translation factors. In Teredinibacter turnerae (strain ATCC 39867 / T7901), this protein is Large ribosomal subunit protein uL11.